The primary structure comprises 329 residues: Neuropeptides B/W receptor type 1 (329 aa).

At methionine 1 to alanine 39 the chain is on the extracellular side. Residues asparagine 3, asparagine 13, and asparagine 25 are each glycosylated (N-linked (GlcNAc...) asparagine). The helical transmembrane segment at valine 40–valine 63 threads the bilayer. The Cytoplasmic portion of the chain corresponds to leucine 64–threonine 74. Residues asparagine 75–phenylalanine 99 traverse the membrane as a helical segment. Topologically, residues leucine 100–isoleucine 114 are extracellular. Residues cysteine 111 and cysteine 190 are joined by a disulfide bond. A helical transmembrane segment spans residues valine 115 to alanine 134. The Cytoplasmic segment spans residues aspartate 135–alanine 159. A helical membrane pass occupies residues valine 160–alanine 179. Topologically, residues arginine 180–alanine 204 are extracellular. The helical transmembrane segment at serine 205–isoleucine 226 threads the bilayer. At threonine 227–arginine 250 the chain is on the cytoplasmic side. Residues valine 251 to valine 275 form a helical membrane-spanning segment. Topologically, residues alanine 276–proline 285 are extracellular. A helical transmembrane segment spans residues leucine 286–alanine 300. Residues asparagine 301–alanine 329 are Cytoplasmic-facing.

This sequence belongs to the G-protein coupled receptor 1 family.

Its subcellular location is the cell membrane. Functionally, interacts specifically with a number of opioid ligands. Receptor for neuropeptides B and W, which may be involved in neuroendocrine system regulation, food intake and the organization of other signals. In Rattus norvegicus (Rat), this protein is Neuropeptides B/W receptor type 1 (Npbwr1).